Reading from the N-terminus, the 645-residue chain is Putative bifunctional exonuclease/endonuclease protein MT2247 (645 aa).

Residues 44 to 207 (VVVDLETTGG…DDARATVDVL (164 aa)) form the Exonuclease domain. The GIY-YIG domain occupies 248-326 (HRPGVYLFRG…LSTHAPPYNR (79 aa)). The segment at 603 to 645 (WQSDLPTEPHPSREQLFGRTGVDCRTGPPQPLLPGRQPFSTAG) is disordered. Residues 635–645 (LPGRQPFSTAG) show a composition bias toward low complexity.

The sequence is that of Putative bifunctional exonuclease/endonuclease protein MT2247 from Mycobacterium tuberculosis (strain CDC 1551 / Oshkosh).